The sequence spans 405 residues: MFPRISQAAILAHSLLAVCTSAATLAEKVRGVNLGGWLVLEPWITPSLFDEAGDEAVDEYTLTEVLGVEEAAARLSEHWNTFITEEDFALIAEAGLNYVRIPIGYWAAAPLDGEPYVSGQLEHLDNAVAWARAHNLKVIVDLHGAPGSQNGFDNSGRRGPIGWQQGDTVEQTILAFETLAQRYLADDDTVTMIEALNEPHVPGGINQDQLKDYYEETLARVRKNSPEATLLLHDGFVQTEGWNGFMTGENVMMDTHHYEVFEGGQNAWSIEKHIDAACQLGRQHLQAADKPVIVGEWTGALSDCTRYLNGKGIGIRYDGTLGSNTAVGACGSKSEGSVAGLSADEIANTRRFIEAQLDAFELRNGWVFWTWKTEGAPGWDMQDLLANGVFPQPLTDREFPNQCNF.

The first 26 residues, 1-26 (MFPRISQAAILAHSLLAVCTSAATLA), serve as a signal peptide directing secretion. The Proton donor role is filled by Glu-198. 2 cysteine pairs are disulfide-bonded: Cys-278–Cys-403 and Cys-304–Cys-330. Glu-296 serves as the catalytic Nucleophile.

Belongs to the glycosyl hydrolase 5 (cellulase A) family. In terms of assembly, monomer. Requires Mn(2+) as cofactor.

It is found in the secreted. The catalysed reaction is Successive hydrolysis of beta-D-glucose units from the non-reducing ends of (1-&gt;3)-beta-D-glucans, releasing alpha-glucose.. In terms of biological role, beta-glucanases participate in the metabolism of beta-glucan, the main structural component of the cell wall. It could also function biosynthetically as a transglycosylase. This is Probable glucan 1,3-beta-glucosidase A (exgA) from Emericella nidulans (strain FGSC A4 / ATCC 38163 / CBS 112.46 / NRRL 194 / M139) (Aspergillus nidulans).